A 360-amino-acid chain; its full sequence is Endolytic peptidoglycan transglycosylase RlpA (360 aa).

The signal sequence occupies residues 1 to 17; it reads MRKEWLWVGIASVLLSA. Cys-18 carries N-palmitoyl cysteine lipidation. Cys-18 carries the S-diacylglycerol cysteine lipid modification. In terms of domain architecture, SPOR spans 283–359; sequence SAISGGYVVQ…AQQQSFIVAA (77 aa).

Belongs to the RlpA family.

It is found in the cell membrane. Functionally, lytic transglycosylase with a strong preference for naked glycan strands that lack stem peptides. This chain is Endolytic peptidoglycan transglycosylase RlpA, found in Yersinia pestis.